A 421-amino-acid polypeptide reads, in one-letter code: Polymerase delta-interacting protein 3 (421 aa).

Ala2 carries the N-acetylalanine modification. Phosphoserine is present on Ser5. Residue Arg33 is modified to Omega-N-methylarginine. Residues Ser44 and Ser127 each carry the phosphoserine modification. Thr140 is subject to Phosphothreonine. Lys200 is covalently cross-linked (Glycyl lysine isopeptide (Lys-Gly) (interchain with G-Cter in SUMO2)). Phosphoserine is present on residues Ser204, Ser215, and Ser217. Residue Lys223 forms a Glycyl lysine isopeptide (Lys-Gly) (interchain with G-Cter in SUMO2) linkage. The residue at position 244 (Ser244) is a Phosphoserine. A Glycyl lysine isopeptide (Lys-Gly) (interchain with G-Cter in SUMO2) cross-link involves residue Lys248. A Phosphoserine modification is found at Ser275. Residues 280 to 351 (TKMTVNNLHP…QPMKCNLHMN (72 aa)) enclose the RRM domain. The segment covering 370-379 (SMKKESELPR) has biased composition (basic and acidic residues). The interval 370–393 (SMKKESELPRRVNSASSSNPPAEV) is disordered. Lys372 is covalently cross-linked (Glycyl lysine isopeptide (Lys-Gly) (interchain with G-Cter in SUMO2)). A phosphoserine; by RPS6KB1 mark is found at Ser383 and Ser385. Lys418 is covalently cross-linked (Glycyl lysine isopeptide (Lys-Gly) (interchain with G-Cter in SUMO2)).

As to quaternary structure, interacts with POLD2. Interacts with NCBP1 and EIF4A3. Associates with the multiprotein exon junction complex (EJC). Interacts with RPS6KB1 (activated). Interacts with ERH. Interacts with THOC2, DDX39B and ZC3H11A; the interactions are ATP-dependent and indicative for an association with the TREX complex. In terms of processing, phosphorylated at Ser-383 and Ser-385 by RPS6KB1.

The protein resides in the nucleus. Its subcellular location is the nucleus speckle. It localises to the cytoplasm. Its function is as follows. Is involved in regulation of translation. Is preferentially associated with CBC-bound spliced mRNA-protein complexes during the pioneer round of mRNA translation. Contributes to enhanced translational efficiency of spliced over nonspliced mRNAs. Recruits activated ribosomal protein S6 kinase beta-1 I/RPS6KB1 to newly synthesized mRNA. Involved in nuclear mRNA export; probably mediated by association with the TREX complex. The chain is Polymerase delta-interacting protein 3 (POLDIP3) from Homo sapiens (Human).